The chain runs to 472 residues: Peptidoglycan endopeptidase RipA (472 aa).

A signal peptide (tat-type signal) is located at residues 1–39 (MRRNRRGSPARPAARFVRPAIPSALSVALLVCTPGLATA). Positions 340 to 472 (RQASEYVIRR…TPYVVRYIEY (133 aa)) constitute a NlpC/P60 domain. Residue Cys383 is the Nucleophile of the active site. His432 (proton acceptor) is an active-site residue. Glu444 is a catalytic residue.

It belongs to the peptidase C40 family. In terms of assembly, monomer. Interacts with RpfB and PBP1A (ponA1) via residues 448-472 of RipA, interacts with RpfE. Interacts with the chaperone MoxR1. RipA-MoxR1 interaction in the cytoplasm leads to proper folding of RipA, resulting in its secretion. Also interacts with Mce2B. Post-translationally, exported by the Tat system. The position of the signal peptide cleavage has not been experimentally proven.

It localises to the secreted. MoxR1-mediated folding is critical for secretion via the TAT system. The synergistic effects on peptidoglycan degradation of RipA plus RpfB are inhibited by addition of PBP1A (ponA1). In terms of biological role, peptidoglycan endopeptidase that cleaves the bond between D-glutamate and meso-diaminopimelate. Binds and degrades high-molecular weight peptidoglycan from a number of Actinobacteria; activity is increased in the presence of RpfB and inhibited by PBP1A (ponA1). Required for normal separation of daughter cells after cell division and for cell wall integrity. Required for host cell invasion and intracellular survival in host macrophages. The chain is Peptidoglycan endopeptidase RipA (ripA) from Mycobacterium tuberculosis (strain ATCC 25618 / H37Rv).